The sequence spans 286 residues: 2-dehydro-3-deoxyphosphooctonate aldolase (286 aa).

Belongs to the KdsA family.

It is found in the cytoplasm. It catalyses the reaction D-arabinose 5-phosphate + phosphoenolpyruvate + H2O = 3-deoxy-alpha-D-manno-2-octulosonate-8-phosphate + phosphate. It participates in carbohydrate biosynthesis; 3-deoxy-D-manno-octulosonate biosynthesis; 3-deoxy-D-manno-octulosonate from D-ribulose 5-phosphate: step 2/3. It functions in the pathway bacterial outer membrane biogenesis; lipopolysaccharide biosynthesis. The chain is 2-dehydro-3-deoxyphosphooctonate aldolase from Haemophilus ducreyi (strain 35000HP / ATCC 700724).